Reading from the N-terminus, the 381-residue chain is Ceramide-binding protein svf-1 (381 aa).

Residues 1–18 form a peripherally associates with membranes region; it reads MFKWAQAALANVAGTKEP.

Belongs to the SVF1 family.

Its subcellular location is the golgi apparatus. It is found in the cis-Golgi network membrane. The protein resides in the endoplasmic reticulum membrane. The protein localises to the cytoplasm. It localises to the nucleus. Ceramide-binding protein that may transfer ceramides from the endoplasmic reticulum membrane to the cis-Golgi network membrane, and is thereby required for the biosynthesis of complex sphingolipids. The chain is Ceramide-binding protein svf-1 (svf-1) from Neurospora crassa (strain ATCC 24698 / 74-OR23-1A / CBS 708.71 / DSM 1257 / FGSC 987).